Here is a 278-residue protein sequence, read N- to C-terminus: MALKNYNPTSPARRGLILVDKSGLYKGKPVKSLTEGKRKTGGRNNKGHVTSRGIGGGHKQKYRYIDFKRRKWDVEGTVERIEYDPNRTAFIALVKYDDGELAYIIAPQRLAVGDKVIAAEKADTKPGNAMLLGQMPVGTICHNVEMKPGKGGQIARSAGAYVQLVGRDRGMVIVRLNSGEQRYLRADCMGTVGAVSNPDNQNQNLGKAGRRRWMGVKPLTRGVAKNPVDHPHGGGEGRTSGGRHPVTPWGKPTKGARTRKNKQTDKFIIRSRHAKKKR.

Disordered regions lie at residues 29–53 and 221–278; these read PVKS…TSRG and RGVA…KKKR. Positions 269-278 are enriched in basic residues; the sequence is IRSRHAKKKR.

It belongs to the universal ribosomal protein uL2 family. In terms of assembly, part of the 50S ribosomal subunit. Forms a bridge to the 30S subunit in the 70S ribosome.

In terms of biological role, one of the primary rRNA binding proteins. Required for association of the 30S and 50S subunits to form the 70S ribosome, for tRNA binding and peptide bond formation. It has been suggested to have peptidyltransferase activity; this is somewhat controversial. Makes several contacts with the 16S rRNA in the 70S ribosome. In Erythrobacter litoralis (strain HTCC2594), this protein is Large ribosomal subunit protein uL2.